The following is an 82-amino-acid chain: Putative antimicrobial peptide 7848 (82 aa).

An N-terminal signal peptide occupies residues 1 to 17 (MNENLWAAPAPKKLSKH). Residues 16 to 60 (KHFFGRGGPLGKETGPNLFPKKPGAGKGLGFPPTKKPRGQPRVLK) are disordered. Positions 38–82 (PGAGKGLGFPPTKKPRGQPRVLKKPKWNSEGLIGILHRGSDGVQF) are excised as a propeptide. Basic residues predominate over residues 50–60 (KKPRGQPRVLK).

This sequence belongs to the non-disulfide-bridged peptide (NDBP) superfamily. Short antimicrobial peptide (group 4) family. Expressed by the venom gland.

It is found in the secreted. This Urodacus yaschenkoi (Inland robust scorpion) protein is Putative antimicrobial peptide 7848.